The following is a 521-amino-acid chain: Cytochrome P450 1A1 (521 aa).

Position 229 (Phe-229) interacts with substrate. Cys-463 contributes to the heme binding site.

This sequence belongs to the cytochrome P450 family. It depends on heme as a cofactor.

The protein localises to the endoplasmic reticulum membrane. The protein resides in the microsome membrane. The enzyme catalyses an organic molecule + reduced [NADPH--hemoprotein reductase] + O2 = an alcohol + oxidized [NADPH--hemoprotein reductase] + H2O + H(+). Cytochromes P450 are a group of heme-thiolate monooxygenases. They oxidize a variety of structurally unrelated compounds, including steroids, fatty acids, and xenobiotics. The sequence is that of Cytochrome P450 1A1 (cyp1a1) from Sparus aurata (Gilthead sea bream).